Reading from the N-terminus, the 247-residue chain is Terpene cyclase adrI (247 aa).

5 helical membrane passes run 20-40, 51-71, 76-96, 112-132, and 141-161; these read VAEF…FSML, TGIF…FIYP, HWEG…FFII, NLYF…YSFA, and FFYG…AQIL. Asn164 carries an N-linked (GlcNAc...) asparagine glycan. The next 2 membrane-spanning stretches (helical) occupy residues 179–199 and 205–225; these read FGGF…GPWF and KFYI…YYVI.

This sequence belongs to the paxB family.

The protein resides in the membrane. The protein operates within secondary metabolite biosynthesis; terpenoid biosynthesis. Functionally, terpene cyclase; part of the gene cluster that mediates the biosynthesis of andrastins, meroterpenoid compounds that exhibit inhibitory activity against ras farnesyltransferase, suggesting that they could be promising leads for antitumor agents. The first step of the pathway is the synthesis of 3,5-dimethylorsellinic acid (DMOA) by the polyketide synthase adrD via condensation of one acetyl-CoA starter unit with 3 malonyl-CoA units and 2 methylations. DMAO is then converted to farnesyl-DMAO by the prenyltransferase adrG. The methyltransferase adrK catalyzes the methylation of the carboxyl group of farnesyl-DMAO to farnesyl-DMAO methyl ester which is further converted to epoxyfarnesyl-DMAO methyl ester by the FAD-dependent monooxygenase adrH. The terpene cyclase adrI then catalyzes the carbon skeletal rearrangement to generate the andrastin E, the first compound in the pathway having the andrastin scaffold, with the tetracyclic ring system. The post-cyclization tailoring enzymes adrF, adrE, adrJ, and adrA, are involved in the conversion of andrastin E into andrastin A. The short chain dehydrogenase adrF is responsible for the oxidation of the C-3 a hydroxyl group of andrastin E to yield the corresponding ketone, andrastin D. The ketoreductase adrE stereoselectively reduces the carbonyl moiety to reverse the stereochemistry of the C-3 position to yield andrastin F. The acetyltransferase adrJ is the acetyltransferase that attaches the acetyl group to the C-3 hydroxyl group of andrastin F to yield andrastin C. Finally, the cytochrome P450 monooxygenase adrA catalyzes two sequential oxidation reactions of the C-23 methyl group, to generate the corresponding alcohol andrastin B, and aldehyde andrastin A. The sequence is that of Terpene cyclase adrI from Penicillium rubens (strain ATCC 28089 / DSM 1075 / NRRL 1951 / Wisconsin 54-1255) (Penicillium chrysogenum).